A 763-amino-acid chain; its full sequence is Autophagy-related protein 18f (763 aa).

2 WD repeats span residues 345–385 and 402–441; these read AHKS…STSR and FTNA…EGDA. The segment covering 701-711 has biased composition (polar residues); sequence NESIQSPSTTT. The disordered stretch occupies residues 701-763; sequence NESIQSPSTT…SEDEDEEQVD (63 aa). Composition is skewed to basic and acidic residues over residues 712-725 and 741-754; these read QDDK…HGTE and PVDK…KNHS.

The protein belongs to the WD repeat PROPPIN family. As to quaternary structure, component of the PI(3,5)P2 regulatory complex at least composed of ATG18, SAC/FIG4, FAB1 and VAC14. As to expression, expressed in roots, flowers and leaves.

The protein localises to the preautophagosomal structure membrane. Its subcellular location is the vacuole membrane. The PI(3,5)P2 regulatory complex regulates both the synthesis and turnover of phosphatidylinositol 3,5-bisphosphate (PtdIns(3,5)P2). Required for autophagy. The chain is Autophagy-related protein 18f (ATG18F) from Arabidopsis thaliana (Mouse-ear cress).